Consider the following 290-residue polypeptide: uncharacterized protein (290 aa).

2 disordered regions span residues 17 to 91 (QTIS…EKNS) and 220 to 259 (DKAS…QMPN). The span at 40–50 (NITTHLSTGNL) shows a compositional bias: polar residues. A compositionally biased stretch (basic residues) spans 66-83 (STKKGKRVSKPGTKKKEK). Basic and acidic residues predominate over residues 233-249 (EGEKDGNAEQGKQKEVQ).

This is an uncharacterized protein from Saccharomyces cerevisiae (strain ATCC 204508 / S288c) (Baker's yeast).